The primary structure comprises 437 residues: Chromosomal replication initiator protein DnaA (437 aa).

The tract at residues 1–72 is domain I, interacts with DnaA modulators; the sequence is MEQFNAFKSL…ESLYEGIKSV (72 aa). The tract at residues 72–99 is domain II; sequence VNFVNEQDFFFNLAKLEENSRDTLYQNS. The tract at residues 100 to 320 is domain III, AAA+ region; sequence GLSKNYTFQN…GIATKLLFFA (221 aa). 4 residues coordinate ATP: glycine 144, glycine 146, lysine 147, and threonine 148. The domain IV, binds dsDNA stretch occupies residues 321-437; it reads KTSKQNLINT…LRDVITSLVI (117 aa).

It belongs to the DnaA family. As to quaternary structure, oligomerizes as a right-handed, spiral filament on DNA at oriC.

The protein resides in the cytoplasm. In terms of biological role, plays an essential role in the initiation and regulation of chromosomal replication. ATP-DnaA binds to the origin of replication (oriC) to initiate formation of the DNA replication initiation complex once per cell cycle. Binds the DnaA box (a 9 base pair repeat at the origin) and separates the double-stranded (ds)DNA. Forms a right-handed helical filament on oriC DNA; dsDNA binds to the exterior of the filament while single-stranded (ss)DNA is stabiized in the filament's interior. The ATP-DnaA-oriC complex binds and stabilizes one strand of the AT-rich DNA unwinding element (DUE), permitting loading of DNA polymerase. After initiation quickly degrades to an ADP-DnaA complex that is not apt for DNA replication. Binds acidic phospholipids. In Mycoplasma genitalium (strain ATCC 33530 / DSM 19775 / NCTC 10195 / G37) (Mycoplasmoides genitalium), this protein is Chromosomal replication initiator protein DnaA.